Consider the following 158-residue polypeptide: NAD(P)H-quinone oxidoreductase subunit J, chloroplastic (158 aa).

The protein belongs to the complex I 30 kDa subunit family. As to quaternary structure, NDH is composed of at least 16 different subunits, 5 of which are encoded in the nucleus.

Its subcellular location is the plastid. The protein localises to the chloroplast thylakoid membrane. The enzyme catalyses a plastoquinone + NADH + (n+1) H(+)(in) = a plastoquinol + NAD(+) + n H(+)(out). It catalyses the reaction a plastoquinone + NADPH + (n+1) H(+)(in) = a plastoquinol + NADP(+) + n H(+)(out). NDH shuttles electrons from NAD(P)H:plastoquinone, via FMN and iron-sulfur (Fe-S) centers, to quinones in the photosynthetic chain and possibly in a chloroplast respiratory chain. The immediate electron acceptor for the enzyme in this species is believed to be plastoquinone. Couples the redox reaction to proton translocation, and thus conserves the redox energy in a proton gradient. This Nymphaea alba (White water-lily) protein is NAD(P)H-quinone oxidoreductase subunit J, chloroplastic.